Here is an 891-residue protein sequence, read N- to C-terminus: DNA mismatch repair protein MutS (891 aa).

632–639 (GPNMAGKS) is an ATP binding site.

It belongs to the DNA mismatch repair MutS family.

In terms of biological role, this protein is involved in the repair of mismatches in DNA. It is possible that it carries out the mismatch recognition step. This protein has a weak ATPase activity. The sequence is that of DNA mismatch repair protein MutS from Rhodopirellula baltica (strain DSM 10527 / NCIMB 13988 / SH1).